The sequence spans 98 residues: NADH-ubiquinone oxidoreductase chain 4L (98 aa).

The next 3 membrane-spanning stretches (helical) occupy residues 1–21 (MPPI…GLLM), 29–49 (SLLC…ILSL), and 61–81 (IILL…LVMI).

It belongs to the complex I subunit 4L family. As to quaternary structure, core subunit of respiratory chain NADH dehydrogenase (Complex I) which is composed of 45 different subunits.

The protein localises to the mitochondrion inner membrane. It carries out the reaction a ubiquinone + NADH + 5 H(+)(in) = a ubiquinol + NAD(+) + 4 H(+)(out). In terms of biological role, core subunit of the mitochondrial membrane respiratory chain NADH dehydrogenase (Complex I) which catalyzes electron transfer from NADH through the respiratory chain, using ubiquinone as an electron acceptor. Part of the enzyme membrane arm which is embedded in the lipid bilayer and involved in proton translocation. This chain is NADH-ubiquinone oxidoreductase chain 4L (MT-ND4L), found in Galeopterus variegatus (Malayan flying lemur).